Reading from the N-terminus, the 458-residue chain is MSRKASLSGFHEWLPAERLVEQHVLDTLRRTFELHGFAGIETRAVETLGQLLRKGEVDKEVYAVSRLAEDEEVAAGRREPKDPADPKRLALHFDLTVPFARYVVENAGHLAFPFRRYQMQKVWRGERPQEGRAREFTQADIDVVGDGALSPRYDADVALVMAEALGALPIGDFLIRVNNRKLAEGFYRGIGLEDTAGVLRSIDKLEKVGPEEVARLLQEEVGASPEQAAQALALADIRTSDTSFVERVRALGVTHELLEEGLTELADVVATLHRRAPGRAVADLSIARGLDYYTGTVYETVLVGHEQLGSICSGGRYDALASKGNRVFPGVGLSIGVTRLVMRMLSQQMAVASRSVPTAVYVALTADEDWSEAQDVAALLRERGIPAEVAVSAEKFGRQIKYADRRGIPFVWFMGRDDAGARVHEVKDIRSGEQHAADPADWTPPAEDLLPQVARAQD.

It belongs to the class-II aminoacyl-tRNA synthetase family. In terms of assembly, homodimer.

Its subcellular location is the cytoplasm. It catalyses the reaction tRNA(His) + L-histidine + ATP = L-histidyl-tRNA(His) + AMP + diphosphate + H(+). This is Histidine--tRNA ligase from Micrococcus luteus (strain ATCC 4698 / DSM 20030 / JCM 1464 / CCM 169 / CCUG 5858 / IAM 1056 / NBRC 3333 / NCIMB 9278 / NCTC 2665 / VKM Ac-2230) (Micrococcus lysodeikticus).